The primary structure comprises 476 residues: Deoxyguanosinetriphosphate triphosphohydrolase-like protein 2 (476 aa).

The segment at 1 to 20 is disordered; the sequence is MYTDADRSREVVPEKDGHDK. Positions 60–233 constitute an HD domain; that stretch reads RLTHSLEVAQ…MDLADDIAYS (174 aa).

The protein belongs to the dGTPase family. Type 2 subfamily.

The protein is Deoxyguanosinetriphosphate triphosphohydrolase-like protein 2 of Mesorhizobium japonicum (strain LMG 29417 / CECT 9101 / MAFF 303099) (Mesorhizobium loti (strain MAFF 303099)).